The primary structure comprises 212 residues: Thymidylate kinase (212 aa).

Position 9–16 (9–16 (GIDGCGKT)) interacts with ATP.

Belongs to the thymidylate kinase family.

It catalyses the reaction dTMP + ATP = dTDP + ADP. In terms of biological role, phosphorylation of dTMP to form dTDP in both de novo and salvage pathways of dTTP synthesis. The sequence is that of Thymidylate kinase from Synechococcus sp. (strain CC9311).